A 463-amino-acid polypeptide reads, in one-letter code: ATP synthase subunit beta (463 aa).

Gly-152–Thr-159 contributes to the ATP binding site.

This sequence belongs to the ATPase alpha/beta chains family. As to quaternary structure, F-type ATPases have 2 components, CF(1) - the catalytic core - and CF(0) - the membrane proton channel. CF(1) has five subunits: alpha(3), beta(3), gamma(1), delta(1), epsilon(1). CF(0) has three main subunits: a(1), b(2) and c(9-12). The alpha and beta chains form an alternating ring which encloses part of the gamma chain. CF(1) is attached to CF(0) by a central stalk formed by the gamma and epsilon chains, while a peripheral stalk is formed by the delta and b chains.

It is found in the cell inner membrane. It catalyses the reaction ATP + H2O + 4 H(+)(in) = ADP + phosphate + 5 H(+)(out). Its function is as follows. Produces ATP from ADP in the presence of a proton gradient across the membrane. The catalytic sites are hosted primarily by the beta subunits. The polypeptide is ATP synthase subunit beta (Shewanella denitrificans (strain OS217 / ATCC BAA-1090 / DSM 15013)).